The chain runs to 299 residues: Sulfate adenylyltransferase subunit 2 (299 aa).

The tract at residues 276 to 299 (EREGRVIDHDSAGSMEKKKREGYF) is disordered.

It belongs to the PAPS reductase family. CysD subfamily. As to quaternary structure, heterodimer composed of CysD, the smaller subunit, and CysN.

The enzyme catalyses sulfate + ATP + H(+) = adenosine 5'-phosphosulfate + diphosphate. Its pathway is sulfur metabolism; hydrogen sulfide biosynthesis; sulfite from sulfate: step 1/3. Its function is as follows. With CysN forms the ATP sulfurylase (ATPS) that catalyzes the adenylation of sulfate producing adenosine 5'-phosphosulfate (APS) and diphosphate, the first enzymatic step in sulfur assimilation pathway. APS synthesis involves the formation of a high-energy phosphoric-sulfuric acid anhydride bond driven by GTP hydrolysis by CysN coupled to ATP hydrolysis by CysD. The sequence is that of Sulfate adenylyltransferase subunit 2 from Pseudoalteromonas translucida (strain TAC 125).